A 44-amino-acid polypeptide reads, in one-letter code: Benzaldehyde dehydrogenase [NAD(+)] II (44 aa).

This sequence belongs to the aldehyde dehydrogenase family.

The enzyme catalyses benzaldehyde + NAD(+) + H2O = benzoate + NADH + 2 H(+). The chain is Benzaldehyde dehydrogenase [NAD(+)] II from Acinetobacter guillouiae (Acinetobacter genomosp. 11).